The following is an 856-amino-acid chain: DNA mismatch repair protein MutS (856 aa).

An ATP-binding site is contributed by 607–614; it reads GPNMSGKS.

This sequence belongs to the DNA mismatch repair MutS family.

Its function is as follows. This protein is involved in the repair of mismatches in DNA. It is possible that it carries out the mismatch recognition step. This protein has a weak ATPase activity. This Lactobacillus delbrueckii subsp. bulgaricus (strain ATCC BAA-365 / Lb-18) protein is DNA mismatch repair protein MutS.